The following is a 237-amino-acid chain: uncharacterized protein (237 aa).

Residues 1 to 28 (MVFSFSTFNRLVTFTVMAAIVSVRPLTA) form the signal peptide.

This is an uncharacterized protein from Sinorhizobium fredii (strain NBRC 101917 / NGR234).